Consider the following 229-residue polypeptide: MLVCIPEVLPKSEVAEFRRLMDAADWEDGRSTAGAQSAMVKRNEQLPPDSDLARTLGRRIVSALTGNPKFVSAAVPLQIFPPLFNRYAASGGHHFGIHVDNAVRGDHLTGLRIRTDLSVTLFLAEPDEYDGGELVIEDTYGSHEVKLAAGDAVLYPSTSLHMVTPVTRGARVASFFWLQSMIRDAQARSMIYDLDNAIQALVERLGRDDPETVKLTGIYHNLIRYWAEV.

One can recognise a Fe2OG dioxygenase domain in the interval 78 to 180; sequence QIFPPLFNRY…RVASFFWLQS (103 aa). His98, Asp100, and His161 together coordinate Fe cation. A 2-oxoglutarate-binding site is contributed by Arg171.

Fe(2+) serves as cofactor. Requires L-ascorbate as cofactor.

The sequence is that of PKHD-type hydroxylase Rpal_3968 from Rhodopseudomonas palustris (strain TIE-1).